Consider the following 118-residue polypeptide: Large ribosomal subunit protein bL20 (118 aa).

Belongs to the bacterial ribosomal protein bL20 family.

Functionally, binds directly to 23S ribosomal RNA and is necessary for the in vitro assembly process of the 50S ribosomal subunit. It is not involved in the protein synthesizing functions of that subunit. The protein is Large ribosomal subunit protein bL20 of Hamiltonella defensa subsp. Acyrthosiphon pisum (strain 5AT).